The sequence spans 206 residues: Large ribosomal subunit protein uL4 (206 aa).

The disordered stretch occupies residues 48–78 (THSVKTRGHVSGGGAKPWRQKGTGRARAGSN).

This sequence belongs to the universal ribosomal protein uL4 family. As to quaternary structure, part of the 50S ribosomal subunit.

One of the primary rRNA binding proteins, this protein initially binds near the 5'-end of the 23S rRNA. It is important during the early stages of 50S assembly. It makes multiple contacts with different domains of the 23S rRNA in the assembled 50S subunit and ribosome. Functionally, forms part of the polypeptide exit tunnel. The chain is Large ribosomal subunit protein uL4 from Lawsonia intracellularis (strain PHE/MN1-00).